The following is a 531-amino-acid chain: Probable rhamnogalacturonate lyase A (531 aa).

A signal peptide spans 1–20 (MLSKTSLLSLLSLAAGVVNA). 2 disulfide bridges follow: cysteine 50/cysteine 93 and cysteine 184/cysteine 193.

Belongs to the polysaccharide lyase 4 family.

Its subcellular location is the secreted. It carries out the reaction Endotype eliminative cleavage of L-alpha-rhamnopyranosyl-(1-&gt;4)-alpha-D-galactopyranosyluronic acid bonds of rhamnogalacturonan I domains in ramified hairy regions of pectin leaving L-rhamnopyranose at the reducing end and 4-deoxy-4,5-unsaturated D-galactopyranosyluronic acid at the non-reducing end.. Functionally, pectinolytic enzymes consist of four classes of enzymes: pectin lyase, polygalacturonase, pectin methylesterase and rhamnogalacturonase. Degrades the rhamnogalacturonan I (RG-I) backbone of pectin. This is Probable rhamnogalacturonate lyase A (rglA) from Aspergillus niger (strain ATCC MYA-4892 / CBS 513.88 / FGSC A1513).